Here is a 69-residue protein sequence, read N- to C-terminus: Light-harvesting polypeptide B-800/860 alpha chain (69 aa).

Topologically, residues 1 to 14 (MTNGKIWLVVKPTV) are cytoplasmic. A helical membrane pass occupies residues 15 to 35 (GLPIGMLFAALLAVLIHGLLF). His-31 provides a ligand contact to a bacteriochlorophyll. Topologically, residues 36 to 69 (VDGRLKSWWSEFPVAKPAVVSVQAAPAPVAAEVK) are periplasmic.

This sequence belongs to the antenna complex alpha subunit family. In terms of assembly, the core complex is formed by different alpha and beta chains, binding bacteriochlorophyll molecules, and arranged most probably in tetrameric structures disposed around the reaction center. The non-pigmented gamma chains may constitute additional components.

It is found in the cell inner membrane. In terms of biological role, antenna complexes are light-harvesting systems, which transfer the excitation energy to the reaction centers. The sequence is that of Light-harvesting polypeptide B-800/860 alpha chain from Rhodocyclus tenuis (Rhodospirillum tenue).